We begin with the raw amino-acid sequence, 282 residues long: Acetyl-coenzyme A carboxylase carboxyl transferase subunit beta (282 aa).

In terms of domain architecture, CoA carboxyltransferase N-terminal spans 26–282 (QWVKCPETGE…IIRLLNLLME (257 aa)).

This sequence belongs to the AccD/PCCB family. In terms of assembly, acetyl-CoA carboxylase is a heterohexamer composed of biotin carboxyl carrier protein (AccB), biotin carboxylase (AccC) and two subunits each of ACCase subunit alpha (AccA) and ACCase subunit beta (AccD).

Its subcellular location is the cytoplasm. It carries out the reaction N(6)-carboxybiotinyl-L-lysyl-[protein] + acetyl-CoA = N(6)-biotinyl-L-lysyl-[protein] + malonyl-CoA. Its pathway is lipid metabolism; malonyl-CoA biosynthesis; malonyl-CoA from acetyl-CoA: step 1/1. Functionally, component of the acetyl coenzyme A carboxylase (ACC) complex. Biotin carboxylase (BC) catalyzes the carboxylation of biotin on its carrier protein (BCCP) and then the CO(2) group is transferred by the transcarboxylase to acetyl-CoA to form malonyl-CoA. The polypeptide is Acetyl-coenzyme A carboxylase carboxyl transferase subunit beta (Salinibacter ruber (strain DSM 13855 / M31)).